A 574-amino-acid chain; its full sequence is Proline--tRNA ligase (574 aa).

This sequence belongs to the class-II aminoacyl-tRNA synthetase family. ProS type 1 subfamily. As to quaternary structure, homodimer.

It localises to the cytoplasm. The catalysed reaction is tRNA(Pro) + L-proline + ATP = L-prolyl-tRNA(Pro) + AMP + diphosphate. Functionally, catalyzes the attachment of proline to tRNA(Pro) in a two-step reaction: proline is first activated by ATP to form Pro-AMP and then transferred to the acceptor end of tRNA(Pro). As ProRS can inadvertently accommodate and process non-cognate amino acids such as alanine and cysteine, to avoid such errors it has two additional distinct editing activities against alanine. One activity is designated as 'pretransfer' editing and involves the tRNA(Pro)-independent hydrolysis of activated Ala-AMP. The other activity is designated 'posttransfer' editing and involves deacylation of mischarged Ala-tRNA(Pro). The misacylated Cys-tRNA(Pro) is not edited by ProRS. The protein is Proline--tRNA ligase of Nitratidesulfovibrio vulgaris (strain DP4) (Desulfovibrio vulgaris).